The sequence spans 389 residues: Large ribosomal subunit protein uL3 (389 aa).

This sequence belongs to the universal ribosomal protein uL3 family. As to quaternary structure, component of the large ribosomal subunit. Mature ribosomes consist of a small (40S) and a large (60S) subunit. The 40S subunit contains about 32 different proteins and 1 molecule of RNA (18S). The 60S subunit contains 45 different proteins and 3 molecules of RNA (25S, 5.8S and 5S).

The protein localises to the cytoplasm. In terms of biological role, component of the ribosome, a large ribonucleoprotein complex responsible for the synthesis of proteins in the cell. The small ribosomal subunit (SSU) binds messenger RNAs (mRNAs) and translates the encoded message by selecting cognate aminoacyl-transfer RNA (tRNA) molecules. The large subunit (LSU) contains the ribosomal catalytic site termed the peptidyl transferase center (PTC), which catalyzes the formation of peptide bonds, thereby polymerizing the amino acids delivered by tRNAs into a polypeptide chain. The nascent polypeptides leave the ribosome through a tunnel in the LSU and interact with protein factors that function in enzymatic processing, targeting, and the membrane insertion of nascent chains at the exit of the ribosomal tunnel. RPL3 plays a role in coordinating processes of accommodating the aminoacyl-tRNA in the PTC. The chain is Large ribosomal subunit protein uL3 from Candida albicans (strain SC5314 / ATCC MYA-2876) (Yeast).